A 160-amino-acid polypeptide reads, in one-letter code: Glyoxalase domain-containing protein 5 (160 aa).

In terms of domain architecture, VOC spans 33–153 (RLDHLVLTVR…DQNLIEVSNY (121 aa)).

It belongs to the glyoxalase I family.

The polypeptide is Glyoxalase domain-containing protein 5 (glod5) (Xenopus tropicalis (Western clawed frog)).